A 700-amino-acid polypeptide reads, in one-letter code: Acetoacetyl-CoA synthetase (700 aa).

A disordered region spans residues 1-35 (MTAVSANGKTTEKHENGAHTNGTTNGTTNGSMNGN). Residues 18-35 (AHTNGTTNGTTNGSMNGN) are compositionally biased toward low complexity.

Belongs to the ATP-dependent AMP-binding enzyme family. As to expression, present in most cells of the organism.

It is found in the cytoplasm. It localises to the nucleus. It carries out the reaction acetoacetate + ATP + CoA = acetoacetyl-CoA + AMP + diphosphate. Functionally, activates acetoacetate to acetoacetyl-CoA. Negatively regulates let-60 Ras activity during vulval induction. This chain is Acetoacetyl-CoA synthetase (sur-5), found in Caenorhabditis elegans.